The sequence spans 376 residues: Mitochondrial distribution and morphology protein 34 (376 aa).

In terms of domain architecture, SMP-LTD spans 1 to 194 (MSFTFNWPRF…LPGIIHRLSQ (194 aa)). 2 disordered regions span residues 207–249 (SKHP…PKIV) and 286–376 (SVPP…LHPS). Residues 218–230 (EISEPGDYGEEGE) show a composition bias toward acidic residues. Over residues 306 to 318 (VKAKRKRTYRLGG) the composition is skewed to basic residues. Over residues 350–362 (MDRYFRSYDDHSR) the composition is skewed to basic and acidic residues.

The protein belongs to the MDM34 family. In terms of assembly, component of the ER-mitochondria encounter structure (ERMES) or MDM complex, composed of MMM1, MDM10, MDM12 and MDM34.

Its subcellular location is the mitochondrion outer membrane. Its function is as follows. Component of the ERMES/MDM complex, which serves as a molecular tether to connect the endoplasmic reticulum (ER) and mitochondria. Components of this complex are involved in the control of mitochondrial shape and protein biogenesis, and function in nonvesicular lipid trafficking between the ER and mitochondria. MDM34 is required for the interaction of the ER-resident membrane protein MMM1 and the outer mitochondrial membrane-resident beta-barrel protein MDM10. The sequence is that of Mitochondrial distribution and morphology protein 34 from Laccaria bicolor (strain S238N-H82 / ATCC MYA-4686) (Bicoloured deceiver).